A 127-amino-acid chain; its full sequence is Large ribosomal subunit protein bL17 (127 aa).

Belongs to the bacterial ribosomal protein bL17 family. In terms of assembly, part of the 50S ribosomal subunit. Contacts protein L32.

In Legionella pneumophila (strain Paris), this protein is Large ribosomal subunit protein bL17.